A 205-amino-acid chain; its full sequence is Small ribosomal subunit protein uS4 (205 aa).

In terms of domain architecture, S4 RNA-binding spans 94-157; it reads SRLDTVVYRM…QQIPLIQESI (64 aa).

The protein belongs to the universal ribosomal protein uS4 family. In terms of assembly, part of the 30S ribosomal subunit. Contacts protein S5. The interaction surface between S4 and S5 is involved in control of translational fidelity.

In terms of biological role, one of the primary rRNA binding proteins, it binds directly to 16S rRNA where it nucleates assembly of the body of the 30S subunit. Its function is as follows. With S5 and S12 plays an important role in translational accuracy. In Rickettsia typhi (strain ATCC VR-144 / Wilmington), this protein is Small ribosomal subunit protein uS4.